Reading from the N-terminus, the 142-residue chain is uncharacterized protein (142 aa).

An N-terminal signal peptide occupies residues 1-20 (MPSVNEFFIFFLIVWHTCEC). An N-linked (GlcNAc...) asparagine glycan is attached at asparagine 80.

This is an uncharacterized protein from Dictyostelium discoideum (Social amoeba).